A 445-amino-acid chain; its full sequence is Putative transcription factor bHLH056 (445 aa).

Disordered stretches follow at residues 36 to 70, 224 to 260, and 365 to 445; these read NQTH…PPHL, QIQP…AEMH, and PFPN…QPTA. Residues 231 to 246 are compositionally biased toward basic and acidic residues; sequence SKLKAREETHGTEEAR. In terms of domain architecture, bHLH spans 255 to 304; that stretch reads RTAEMHNLAERRRREKINEKMKTLQQLIPRCNKSTKVSTLDDAIEYVKSL. A compositionally biased stretch (low complexity) spans 418–433; sequence QGQTTSQLSSGQASSS.

In terms of assembly, homodimer.

It localises to the nucleus. This is Putative transcription factor bHLH056 (BHLH56) from Arabidopsis thaliana (Mouse-ear cress).